The primary structure comprises 206 residues: Protease (206 aa).

Active-site residues include histidine 54, aspartate 71, and cysteine 122.

It belongs to the peptidase C5 family. As to quaternary structure, interacts with protease cofactor pVI-C; this interaction is necessary for protease activation.

It is found in the virion. Its subcellular location is the host nucleus. It catalyses the reaction Cleaves proteins of the adenovirus and its host cell at two consensus sites: -Yaa-Xaa-Gly-Gly-|-Xaa- and -Yaa-Xaa-Gly-Xaa-|-Gly- (in which Yaa is Met, Ile or Leu, and Xaa is any amino acid).. Its activity is regulated as follows. Requires DNA and protease cofactor for maximal activation. Inside nascent virions, becomes partially activated by binding to the viral DNA, allowing it to cleave the cofactor that binds to the protease and fully activates it. Actin, like the viral protease cofactor, seems to act as a cofactor in the cleavage of cytokeratin 18 and of actin itself. Cleaves viral precursor proteins (pTP, pIIIa, pVI, pVII, pVIII, and pX) inside newly assembled particles giving rise to mature virions. Protease complexed to its cofactor slides along the viral DNA to specifically locate and cleave the viral precursors. Mature virions have a weakened organization compared to the unmature virions, thereby facilitating subsequent uncoating. Without maturation, the particle lacks infectivity and is unable to uncoat. Late in adenovirus infection, in the cytoplasm, may participate in the cytoskeleton destruction. Cleaves host cell cytoskeletal keratins K7 and K18. The sequence is that of Protease from Homo sapiens (Human).